The sequence spans 315 residues: Cobalamin biosynthesis protein CobD (315 aa).

7 helical membrane-spanning segments follow: residues 1 to 21, 50 to 70, 79 to 99, 151 to 171, 209 to 229, 250 to 270, and 291 to 311; these read MLDIIIAVIIDWIIGDPYWFP, VFGGFIVIIVSSISFLIPFII, VIYHVINIFFLWTVLAAKSLH, DGIIAPLLFAMLGGAPLAMMY, VTGIIMCLVSPIIGGNIFYSI, AAAAASGIMLGGTNIYFGEVV, and IILMYSSEILFIIIYVIIICF.

The protein belongs to the CobD/CbiB family.

It localises to the cell membrane. It participates in cofactor biosynthesis; adenosylcobalamin biosynthesis. In terms of biological role, converts cobyric acid to cobinamide by the addition of aminopropanol on the F carboxylic group. In Clostridium acetobutylicum (strain ATCC 824 / DSM 792 / JCM 1419 / IAM 19013 / LMG 5710 / NBRC 13948 / NRRL B-527 / VKM B-1787 / 2291 / W), this protein is Cobalamin biosynthesis protein CobD.